A 346-amino-acid polypeptide reads, in one-letter code: uncharacterized protein (346 aa).

The first 27 residues, 1-27, serve as a signal peptide directing secretion; that stretch reads MKFNKISLSVSTALLAAGLAVSGSANA.

This is an uncharacterized protein from Haemophilus influenzae (strain ATCC 51907 / DSM 11121 / KW20 / Rd).